The primary structure comprises 640 residues: Probable serine/threonine-protein kinase samkA (640 aa).

In terms of domain architecture, SAM spans 21–84; it reads WNNEKIIKWL…SEFEILKNNY (64 aa). A coiled-coil region spans residues 73-100; it reads FKSEFEILKNNYDNNNNNNNNNNNNNNN. The interval 84–165 is disordered; it reads YDNNNNNNNN…INFNSNSNIT (82 aa). A Protein kinase domain is found at 191 to 437; that stretch reads YEYVESISLG…SKDLQKLSWF (247 aa). ATP-binding positions include 197-205 and Lys-221; that span reads ISLGVFSVV. The active-site Proton acceptor is the Asp-312. Residues 448 to 482 are disordered; that stretch reads QELTKSTTNTTTTTTTTTTPPPPPSPSSSSPSMNE. Residues 453-465 show a composition bias toward low complexity; the sequence is STTNTTTTTTTTT.

Belongs to the protein kinase superfamily. Ser/Thr protein kinase family.

The catalysed reaction is L-seryl-[protein] + ATP = O-phospho-L-seryl-[protein] + ADP + H(+). The enzyme catalyses L-threonyl-[protein] + ATP = O-phospho-L-threonyl-[protein] + ADP + H(+). The chain is Probable serine/threonine-protein kinase samkA (samkA) from Dictyostelium discoideum (Social amoeba).